Consider the following 462-residue polypeptide: Light-independent protochlorophyllide reductase subunit N (462 aa).

Residues C24, C49, and C109 each coordinate [4Fe-4S] cluster.

This sequence belongs to the BchN/ChlN family. Protochlorophyllide reductase is composed of three subunits; ChlL, ChlN and ChlB. Forms a heterotetramer of two ChlB and two ChlN subunits. Requires [4Fe-4S] cluster as cofactor.

Its subcellular location is the plastid. It localises to the chloroplast. It carries out the reaction chlorophyllide a + oxidized 2[4Fe-4S]-[ferredoxin] + 2 ADP + 2 phosphate = protochlorophyllide a + reduced 2[4Fe-4S]-[ferredoxin] + 2 ATP + 2 H2O. Its pathway is porphyrin-containing compound metabolism; chlorophyll biosynthesis (light-independent). Functionally, component of the dark-operative protochlorophyllide reductase (DPOR) that uses Mg-ATP and reduced ferredoxin to reduce ring D of protochlorophyllide (Pchlide) to form chlorophyllide a (Chlide). This reaction is light-independent. The NB-protein (ChlN-ChlB) is the catalytic component of the complex. This chain is Light-independent protochlorophyllide reductase subunit N, found in Pleurastrum terricola (Filamentous green alga).